A 177-amino-acid polypeptide reads, in one-letter code: ATP synthase subunit delta (177 aa).

The protein belongs to the ATPase delta chain family. In terms of assembly, F-type ATPases have 2 components, F(1) - the catalytic core - and F(0) - the membrane proton channel. F(1) has five subunits: alpha(3), beta(3), gamma(1), delta(1), epsilon(1). CF(0) has four main subunits: a(1), b(1), b'(1) and c(10-14). The alpha and beta chains form an alternating ring which encloses part of the gamma chain. F(1) is attached to F(0) by a central stalk formed by the gamma and epsilon chains, while a peripheral stalk is formed by the delta, b and b' chains.

It localises to the cell inner membrane. Its function is as follows. F(1)F(0) ATP synthase produces ATP from ADP in the presence of a proton or sodium gradient. F-type ATPases consist of two structural domains, F(1) containing the extramembraneous catalytic core and F(0) containing the membrane proton channel, linked together by a central stalk and a peripheral stalk. During catalysis, ATP synthesis in the catalytic domain of F(1) is coupled via a rotary mechanism of the central stalk subunits to proton translocation. In terms of biological role, this protein is part of the stalk that links CF(0) to CF(1). It either transmits conformational changes from CF(0) to CF(1) or is implicated in proton conduction. In Methylibium petroleiphilum (strain ATCC BAA-1232 / LMG 22953 / PM1), this protein is ATP synthase subunit delta.